The primary structure comprises 280 residues: MALAIRSSLRAAAMGRKAFRQAVPVRVAPAQRVRSVTTASAEITAYSVEEKGPKDSLEYRMFFKQGAKEVSCWHEIPLYAGDGHLHYICEIPKETSAKMEVATDEPRTPIKQDVKKGKLRFYPYNINWNYGMLPQTWEDPGHTDATLGAAGDNDPVDVVEIGAAAAKRGGVYKVKPVGVLAMIDDGELDWKVIAISADDPKAALCNDVEDVEKHFPGEIQKVLEWFRDYKIPDGKPANKFGYDNKCMNKEFTLNVIKETHEAYVKLKSGARANSEELSLI.

Residue Arg-120 coordinates diphosphate. Asp-152, Asp-157, and Asp-189 together coordinate Mg(2+).

As to quaternary structure, monomer. Requires Mg(2+) as cofactor. The N-terminus is blocked.

Its subcellular location is the plastid. It localises to the chloroplast. It carries out the reaction diphosphate + H2O = 2 phosphate + H(+). The chain is Soluble inorganic pyrophosphatase 1, chloroplastic (ppa1) from Chlamydomonas reinhardtii (Chlamydomonas smithii).